The chain runs to 1279 residues: Amylopullulanase (1279 aa).

Residues 1-35 form the signal peptide; it reads MYKKLFTKKFISFVMSLLLVLTAAFSSMPFHNVYA. Positions 248, 250, 288, 343, 401, 403, 406, 407, 452, and 454 each coordinate Ca(2+). Positions 527 and 627 each coordinate substrate. D629 acts as the Nucleophile in catalysis. E658 functions as the Proton donor in the catalytic mechanism. Substrate is bound by residues 734-735, D794, and R798; that span reads HD. Fibronectin type-III domains follow at residues 930–1022 and 1158–1252; these read APQV…AYPI and KPTA…VVPI.

The protein belongs to the glycosyl hydrolase 13 family. Ca(2+) serves as cofactor.

The enzyme catalyses Endohydrolysis of (1-&gt;4)-alpha-D-glucosidic linkages in polysaccharides containing three or more (1-&gt;4)-alpha-linked D-glucose units.. It carries out the reaction Hydrolysis of (1-&gt;6)-alpha-D-glucosidic linkages in pullulan, amylopectin and glycogen, and in the alpha- and beta-limit dextrins of amylopectin and glycogen.. In Thermoanaerobacterium saccharolyticum, this protein is Amylopullulanase (apu).